The following is a 516-amino-acid chain: 3-phosphoshikimate 1-carboxyvinyltransferase, chloroplastic (516 aa).

Residues 1-72 (MAQSSRICHG…KVTASVSTSE (72 aa)) constitute a chloroplast transit peptide. Residues lysine 95, serine 96, and arginine 100 each contribute to the 3-phosphoshikimate site. Phosphoenolpyruvate is bound at residue lysine 95. Phosphoenolpyruvate contacts are provided by glycine 173 and arginine 203. Serine 250, serine 251, glutamine 252, serine 278, aspartate 403, and lysine 430 together coordinate 3-phosphoshikimate. Glutamine 252 is a binding site for phosphoenolpyruvate. Aspartate 403 acts as the Proton acceptor in catalysis. Arginine 434, arginine 476, and lysine 501 together coordinate phosphoenolpyruvate.

The protein belongs to the EPSP synthase family.

It is found in the plastid. Its subcellular location is the chloroplast. It catalyses the reaction 3-phosphoshikimate + phosphoenolpyruvate = 5-O-(1-carboxyvinyl)-3-phosphoshikimate + phosphate. It participates in metabolic intermediate biosynthesis; chorismate biosynthesis; chorismate from D-erythrose 4-phosphate and phosphoenolpyruvate: step 6/7. Functionally, catalyzes the transfer of the enolpyruvyl moiety of phosphoenolpyruvate (PEP) to the 5-hydroxyl of shikimate-3-phosphate (S3P) to produce enolpyruvyl shikimate-3-phosphate and inorganic phosphate. The chain is 3-phosphoshikimate 1-carboxyvinyltransferase, chloroplastic from Brassica napus (Rape).